The chain runs to 423 residues: Transmembrane protease serine 11E (423 aa).

Topologically, residues 1–18 (MYRSCVVRARKRTCVEPW) are cytoplasmic. The helical; Signal-anchor for type II membrane protein transmembrane segment at 19–39 (VIGIISFLSLIVLAVCIGLTV) threads the bilayer. At 40–423 (HYVRYNHRRT…RHWIASNTGI (384 aa)) the chain is on the extracellular side. An SEA domain is found at 48 to 166 (RTYNYYSTLS…ESVKIKKINK (119 aa)). Residues N74, N165, N182, and N223 are each glycosylated (N-linked (GlcNAc...) asparagine). Disulfide bonds link C176–C297, C217–C233, C342–C358, and C369–C398. The 231-residue stretch at 192–422 (IVGGTPVEEE…FRHWIASNTG (231 aa)) folds into the Peptidase S1 domain. Catalysis depends on charge relay system residues H232 and D277. S373 acts as the Charge relay system in catalysis.

Belongs to the peptidase S1 family. In terms of assembly, forms a heterodimer with SERPINA5 and SERPINE1. Post-translationally, N-glycosylated. In terms of tissue distribution, expressed in epidermal, oral and male reproductive tissues.

It is found in the cell membrane. The protein localises to the secreted. Its activity is regulated as follows. Inhibited by SERPINA5. Functionally, serine protease which possesses both gelatinolytic and caseinolytic activities. Shows a preference for Arg in the P1 position. In Mus musculus (Mouse), this protein is Transmembrane protease serine 11E (Tmprss11e).